Reading from the N-terminus, the 1132-residue chain is Mediator of RNA polymerase II transcription subunit 5 (1132 aa).

Basic and acidic residues predominate over residues K998–P1023. The interval K998–A1070 is disordered. Over residues Y1047–D1057 the composition is skewed to acidic residues.

Belongs to the Mediator complex subunit 5 family. As to quaternary structure, component of the Mediator complex, which is composed of at least 21 subunits that form three structurally distinct submodules. The Mediator head module contains MED6, MED8, MED11, SRB4/MED17, SRB5/MED18, ROX3/MED19, SRB2/MED20 and SRB6/MED22, the middle module contains MED1, MED4, NUT1/MED5, MED7, CSE2/MED9, NUT2/MED10, SRB7/MED21 and SOH1/MED31, and the tail module contains MED2, PGD1/MED3, RGR1/MED14, GAL11/MED15 and SIN4/MED16. The head and the middle modules interact directly with RNA polymerase II, whereas the elongated tail module interacts with gene-specific regulatory proteins.

It is found in the nucleus. Functionally, component of the Mediator complex, a coactivator involved in the regulated transcription of nearly all RNA polymerase II-dependent genes. Mediator functions as a bridge to convey information from gene-specific regulatory proteins to the basal RNA polymerase II transcription machinery. The Mediator complex, having a compact conformation in its free form, is recruited to promoters by direct interactions with regulatory proteins and serves for the assembly of a functional preinitiation complex with RNA polymerase II and the general transcription factors. The Mediator complex unfolds to an extended conformation and partially surrounds RNA polymerase II, specifically interacting with the unphosphorylated form of the C-terminal domain (CTD) of RNA polymerase II. The Mediator complex dissociates from the RNA polymerase II holoenzyme and stays at the promoter when transcriptional elongation begins. The protein is Mediator of RNA polymerase II transcription subunit 5 (NUT1) of Saccharomyces cerevisiae (strain ATCC 204508 / S288c) (Baker's yeast).